A 354-amino-acid polypeptide reads, in one-letter code: Opsin-1, short-wave-sensitive 2 (354 aa).

Over 1–43 the chain is Extracellular; that stretch reads MKQQQQTPELFEDFHMPITLDVSNISAYSPFLVPQDHLGHSGV. Residue asparagine 24 is glycosylated (N-linked (GlcNAc...) asparagine). Residues 44 to 68 form a helical membrane-spanning segment; the sequence is FMGMSAFMLFLFIAGTAINVLTIVC. At 69–80 the chain is on the cytoplasmic side; that stretch reads TIQYKKLRSHLN. The chain crosses the membrane as a helical span at residues 81-106; the sequence is YILVNLAISNLWVSVFGSSVAFYAFY. The Extracellular portion of the chain corresponds to 107–120; the sequence is KKYFVFGPIGCKIE. A disulfide bridge links cysteine 117 with cysteine 194. The chain crosses the membrane as a helical span at residues 121-140; that stretch reads GFTSTIGGMVSLWSLAVVAL. Residues 141–159 are Cytoplasmic-facing; that stretch reads ERWLVICKPLGNFTFKTPH. The chain crosses the membrane as a helical span at residues 160–183; that stretch reads AIAGCILPWCMALAAGLPPLLGWS. Topologically, residues 184–209 are extracellular; sequence RYIPEGLQCSCGPDWYTTNNKFNNES. A glycan (N-linked (GlcNAc...) asparagine) is linked at asparagine 207. A helical transmembrane segment spans residues 210–237; sequence YVMFLFCFCFAVPFSTIVFCYGQLLITL. Residues 238–259 lie on the Cytoplasmic side of the membrane; the sequence is KLAAKAQADSASTQKAEREVTK. A helical transmembrane segment spans residues 260–283; the sequence is MVVVMVFGFLICWGPYAIFAIWVV. Over 284-291 the chain is Extracellular; that stretch reads SNRGAPFD. Residues 292-316 form a helical membrane-spanning segment; sequence LRLATIPSCLCKASTVYNPVIYVLM. N6-(retinylidene)lysine is present on lysine 303. Residues 317–354 lie on the Cytoplasmic side of the membrane; sequence NKQFRSCMMKMVFNKNIEEDEASSSSQVTQVSSVAPEK.

Belongs to the G-protein coupled receptor 1 family. Opsin subfamily. In terms of processing, phosphorylated on some or all of the serine and threonine residues present in the C-terminal region. Retinal long single cone outer segments.

Its subcellular location is the membrane. Its function is as follows. Visual pigments are the light-absorbing molecules that mediate vision. They consist of an apoprotein, opsin, covalently linked to cis-retinal. This Danio rerio (Zebrafish) protein is Opsin-1, short-wave-sensitive 2 (opn1sw2).